Here is a 221-residue protein sequence, read N- to C-terminus: Tumor protein p53-inducible nuclear protein 2 (221 aa).

Positions 26–41 match the LIR motif; the sequence is VSEEDEVDGWLIIDLQ. The segment at 41–68 is disordered; the sequence is QDSYTAPPDPGASPAPAGRPPPAPSLMD. Residues 47–64 are compositionally biased toward pro residues; it reads PPDPGASPAPAGRPPPAP. Ser136 carries the post-translational modification Phosphoserine. Residues 177-210 are disordered; it reads RQRAERHTLSAKVLQRQNRARESRSRRPKHQGSF.

In terms of assembly, interacts with VMP1, GABARAP, GABARAPL1, GABARAPL2, MAP1LC3A, MAP1LC3B, MAP1LC3C and THRA.

The protein resides in the cytoplasm. The protein localises to the cytosol. It localises to the nucleus. Its subcellular location is the PML body. It is found in the cytoplasmic vesicle. The protein resides in the autophagosome. Functionally, dual regulator of transcription and autophagy. Positively regulates autophagy and is required for autophagosome formation and processing. May act as a scaffold protein that recruits MAP1LC3A, GABARAP and GABARAPL2 and brings them to the autophagosome membrane by interacting with VMP1 where, in cooperation with the BECN1-PI3-kinase class III complex, they trigger autophagosome development. Acts as a transcriptional activator of THRA. This Mus musculus (Mouse) protein is Tumor protein p53-inducible nuclear protein 2 (Tp53inp2).